The sequence spans 143 residues: Nucleoside diphosphate kinase (143 aa).

K11, F59, R87, T93, R104, and N114 together coordinate ATP. H117 (pros-phosphohistidine intermediate) is an active-site residue.

Belongs to the NDK family. In terms of assembly, homotetramer. Mg(2+) is required as a cofactor.

Its subcellular location is the cytoplasm. The catalysed reaction is a 2'-deoxyribonucleoside 5'-diphosphate + ATP = a 2'-deoxyribonucleoside 5'-triphosphate + ADP. It catalyses the reaction a ribonucleoside 5'-diphosphate + ATP = a ribonucleoside 5'-triphosphate + ADP. In terms of biological role, major role in the synthesis of nucleoside triphosphates other than ATP. The ATP gamma phosphate is transferred to the NDP beta phosphate via a ping-pong mechanism, using a phosphorylated active-site intermediate. In Shewanella sp. (strain ANA-3), this protein is Nucleoside diphosphate kinase.